A 409-amino-acid polypeptide reads, in one-letter code: MLSSCGGHGHGNPRSLQEEHHGRCGEQQGGGGGGGQEQEQDGFLVREARASPPSPSSSSFLGSTSSSCSGGGGGGQMLSFSSPNGTAGLGLSSGGSMQGVLARVRGPFTPTQWMELEHQALIYKHIAANVSVPSSLLLPIRRSLHPWGWGSFPPGCADVEPRRCRRTDGKKWRCSRDAVGDQKYCERHINRGRHRSRKHVEGRKATLTIAEPSTVIAAGVSSRGHTVARQKQVKGSAATVSDPFSRQSNRKFLEKQNVVDQLSPMDSFDFSSTQSSPNYDNVALSPLKLHHDHDESYIGHGAGSSSEKGSMMYESRLTVSKETLDDGPLGEVFKRKNCQSASTEILTEKWTENPNLHCPSGILQMATKFNSISSGNTVNSGGTAVENLITDNGYLTARMMNPHIVPTLL.

2 stretches are compositionally biased toward gly residues: residues 1-10 and 27-36; these read MLSSCGGHGH and QQGGGGGGGQ. The interval 1 to 81 is disordered; that stretch reads MLSSCGGHGH…GGGGQMLSFS (81 aa). Positions 56–68 are enriched in low complexity; the sequence is SSSSFLGSTSSSC. The QLQ domain occupies 107 to 142; the sequence is PFTPTQWMELEHQALIYKHIAANVSVPSSLLLPIRR. A WRC domain is found at 158-202; it reads DVEPRRCRRTDGKKWRCSRDAVGDQKYCERHINRGRHRSRKHVEG. 2 consecutive short sequence motifs (bipartite nuclear localization signal) follow at residues 163–173 and 191–198; these read RCRRTDGKKWR and RGRHRSRK. The interval 221–242 is disordered; that stretch reads SSRGHTVARQKQVKGSAATVSD.

The protein belongs to the GRF family.

It is found in the nucleus. In terms of biological role, transcription activator that plays a regulatory role in gibberellin-induced stem elongation. This chain is Growth-regulating factor 8 (GRF8), found in Oryza sativa subsp. japonica (Rice).